The primary structure comprises 190 residues: dCTP deaminase, dUMP-forming (190 aa).

DCTP contacts are provided by residues 101–106, D119, 127–129, Q148, Y162, and Q174; these read KSSLGR and TLE. E129 functions as the Proton donor/acceptor in the catalytic mechanism. A disordered region spans residues 162 to 184; sequence YGSAKVGSKYQGQRGPTPSRSYQ. Positions 171 to 184 are enriched in polar residues; the sequence is YQGQRGPTPSRSYQ.

Belongs to the dCTP deaminase family. As to quaternary structure, homotrimer.

It catalyses the reaction dCTP + 2 H2O = dUMP + NH4(+) + diphosphate. It participates in pyrimidine metabolism; dUMP biosynthesis; dUMP from dCTP: step 1/1. In terms of biological role, bifunctional enzyme that catalyzes both the deamination of dCTP to dUTP and the hydrolysis of dUTP to dUMP without releasing the toxic dUTP intermediate. The protein is dCTP deaminase, dUMP-forming of Mycobacterium sp. (strain JLS).